Consider the following 253-residue polypeptide: Triosephosphate isomerase (253 aa).

Position 9–11 (9–11 (NWK)) interacts with substrate. The active-site Electrophile is histidine 96. Catalysis depends on glutamate 169, which acts as the Proton acceptor. Residues glycine 175, serine 215, and 236-237 (GG) each bind substrate.

This sequence belongs to the triosephosphate isomerase family. In terms of assembly, homodimer.

It localises to the cytoplasm. It carries out the reaction D-glyceraldehyde 3-phosphate = dihydroxyacetone phosphate. It functions in the pathway carbohydrate biosynthesis; gluconeogenesis. Its pathway is carbohydrate degradation; glycolysis; D-glyceraldehyde 3-phosphate from glycerone phosphate: step 1/1. In terms of biological role, involved in the gluconeogenesis. Catalyzes stereospecifically the conversion of dihydroxyacetone phosphate (DHAP) to D-glyceraldehyde-3-phosphate (G3P). The chain is Triosephosphate isomerase from Borrelia garinii subsp. bavariensis (strain ATCC BAA-2496 / DSM 23469 / PBi) (Borreliella bavariensis).